The chain runs to 640 residues: 1-deoxy-D-xylulose-5-phosphate synthase (640 aa).

Thiamine diphosphate is bound by residues H79 and 120-122 (AHA). Position 151 (D151) interacts with Mg(2+). Thiamine diphosphate-binding positions include 152–153 (GS), N180, Y287, and E369. Residue N180 participates in Mg(2+) binding.

The protein belongs to the transketolase family. DXPS subfamily. Homodimer. Requires Mg(2+) as cofactor. It depends on thiamine diphosphate as a cofactor.

It catalyses the reaction D-glyceraldehyde 3-phosphate + pyruvate + H(+) = 1-deoxy-D-xylulose 5-phosphate + CO2. The protein operates within metabolic intermediate biosynthesis; 1-deoxy-D-xylulose 5-phosphate biosynthesis; 1-deoxy-D-xylulose 5-phosphate from D-glyceraldehyde 3-phosphate and pyruvate: step 1/1. Its function is as follows. Catalyzes the acyloin condensation reaction between C atoms 2 and 3 of pyruvate and glyceraldehyde 3-phosphate to yield 1-deoxy-D-xylulose-5-phosphate (DXP). This Hyphomonas neptunium (strain ATCC 15444) protein is 1-deoxy-D-xylulose-5-phosphate synthase.